Here is a 203-residue protein sequence, read N- to C-terminus: MNRLFRLLPLASLVLTACSLHTPQGPGKSPDSPQWRQHQQAVRSLNQFQTRGAFAYLSDEQKVYARFFWQQTGQDRYRLLLTNPLGSTELSLTAQPGSVQLIDNKGQTYTATDAEEMIGRLTGMPIPLNSLRQWIIGLPGDATDYSLDDQYRLRELNYTQNGKTWHVTYGGYTSDTQPALPSNVELNNGAQRIKLKMDNWIVK.

A signal peptide spans 1–17 (MNRLFRLLPLASLVLTA). The N-palmitoyl cysteine moiety is linked to residue Cys-18. Cys-18 carries S-diacylglycerol cysteine lipidation.

The protein belongs to the LolB family. In terms of assembly, monomer.

Its subcellular location is the cell outer membrane. In terms of biological role, plays a critical role in the incorporation of lipoproteins in the outer membrane after they are released by the LolA protein. The polypeptide is Outer-membrane lipoprotein LolB (Klebsiella pneumoniae (strain 342)).